Reading from the N-terminus, the 227-residue chain is Cytochrome c oxidase subunit 2 (227 aa).

The Mitochondrial intermembrane portion of the chain corresponds to methionine 1–serine 14. Residues proline 15–methionine 45 traverse the membrane as a helical segment. Residues leucine 46–glutamine 59 are Mitochondrial matrix-facing. A helical membrane pass occupies residues glutamate 60 to methionine 87. The Mitochondrial intermembrane segment spans residues aspartate 88–leucine 227. Histidine 161, cysteine 196, glutamate 198, cysteine 200, histidine 204, and methionine 207 together coordinate Cu cation. Glutamate 198 lines the Mg(2+) pocket. The residue at position 218 (tyrosine 218) is a Phosphotyrosine.

This sequence belongs to the cytochrome c oxidase subunit 2 family. In terms of assembly, component of the cytochrome c oxidase (complex IV, CIV), a multisubunit enzyme composed of 14 subunits. The complex is composed of a catalytic core of 3 subunits MT-CO1, MT-CO2 and MT-CO3, encoded in the mitochondrial DNA, and 11 supernumerary subunits COX4I, COX5A, COX5B, COX6A, COX6B, COX6C, COX7A, COX7B, COX7C, COX8 and NDUFA4, which are encoded in the nuclear genome. The complex exists as a monomer or a dimer and forms supercomplexes (SCs) in the inner mitochondrial membrane with NADH-ubiquinone oxidoreductase (complex I, CI) and ubiquinol-cytochrome c oxidoreductase (cytochrome b-c1 complex, complex III, CIII), resulting in different assemblies (supercomplex SCI(1)III(2)IV(1) and megacomplex MCI(2)III(2)IV(2)). Found in a complex with TMEM177, COA6, COX18, COX20, SCO1 and SCO2. Interacts with TMEM177 in a COX20-dependent manner. Interacts with COX20. Interacts with COX16. The cofactor is Cu cation.

It localises to the mitochondrion inner membrane. It catalyses the reaction 4 Fe(II)-[cytochrome c] + O2 + 8 H(+)(in) = 4 Fe(III)-[cytochrome c] + 2 H2O + 4 H(+)(out). Functionally, component of the cytochrome c oxidase, the last enzyme in the mitochondrial electron transport chain which drives oxidative phosphorylation. The respiratory chain contains 3 multisubunit complexes succinate dehydrogenase (complex II, CII), ubiquinol-cytochrome c oxidoreductase (cytochrome b-c1 complex, complex III, CIII) and cytochrome c oxidase (complex IV, CIV), that cooperate to transfer electrons derived from NADH and succinate to molecular oxygen, creating an electrochemical gradient over the inner membrane that drives transmembrane transport and the ATP synthase. Cytochrome c oxidase is the component of the respiratory chain that catalyzes the reduction of oxygen to water. Electrons originating from reduced cytochrome c in the intermembrane space (IMS) are transferred via the dinuclear copper A center (CU(A)) of subunit 2 and heme A of subunit 1 to the active site in subunit 1, a binuclear center (BNC) formed by heme A3 and copper B (CU(B)). The BNC reduces molecular oxygen to 2 water molecules using 4 electrons from cytochrome c in the IMS and 4 protons from the mitochondrial matrix. This is Cytochrome c oxidase subunit 2 (MT-CO2) from Rousettus leschenaultii (Leschenault's rousette).